We begin with the raw amino-acid sequence, 341 residues long: Phosphoribosylformylglycinamidine cyclo-ligase (341 aa).

This sequence belongs to the AIR synthase family.

The protein localises to the cytoplasm. It catalyses the reaction 2-formamido-N(1)-(5-O-phospho-beta-D-ribosyl)acetamidine + ATP = 5-amino-1-(5-phospho-beta-D-ribosyl)imidazole + ADP + phosphate + H(+). Its pathway is purine metabolism; IMP biosynthesis via de novo pathway; 5-amino-1-(5-phospho-D-ribosyl)imidazole from N(2)-formyl-N(1)-(5-phospho-D-ribosyl)glycinamide: step 2/2. The chain is Phosphoribosylformylglycinamidine cyclo-ligase from Lachnoclostridium phytofermentans (strain ATCC 700394 / DSM 18823 / ISDg) (Clostridium phytofermentans).